We begin with the raw amino-acid sequence, 473 residues long: MAQLEGYCFSAALSCTFLVSCLLFSAFSRALREPYMDEIFHLPQAQRYCEGHFSLSQWDPMITTLPGLYLVSVGVVKPAIWIFAWSEHVVCSIGMLRFVNLLFSVGNFYLLYLLFHKVQPRNKAASSIQRVLSTLTLAVFPTLYFFNFLYYTEAGSMFFTLFAYLMCLYGNHKTSAFLGFCGFMFRQTNIIWAVFCAGNVIAQKLTEAWKTELQKKEDRLPPIKGPFAEFRKILQFLLAYSMSFKNLSMLFCLTWPYILLGFLFCAFVVVNGGIVIGDRSSHEACLHFPQLFYFFSFTLFFSFPHLLSPSKIKTFLSLVWKHGILFLVVTLVSVFLVWKFTYAHKYLLADNRHYTFYVWKRVFQRYAILKYLLVPAYIFAGWSIADSLKSKPIFWNLMFFICLFIVIVPQKLLEFRYFILPYVIYRLNITLPPTSRLVCELSCYAIVNFITFYIFLNKTFQWPNSQDIQRFMW.

The Cytoplasmic portion of the chain corresponds to 1-6; that stretch reads MAQLEG. The chain crosses the membrane as a helical span at residues 7-27; it reads YCFSAALSCTFLVSCLLFSAF. Residues 28 to 64 are Extracellular-facing; the sequence is SRALREPYMDEIFHLPQAQRYCEGHFSLSQWDPMITT. Residues 65-85 form a helical membrane-spanning segment; that stretch reads LPGLYLVSVGVVKPAIWIFAW. The Cytoplasmic portion of the chain corresponds to 86–97; that stretch reads SEHVVCSIGMLR. The helical transmembrane segment at 98–118 threads the bilayer; the sequence is FVNLLFSVGNFYLLYLLFHKV. The Extracellular portion of the chain corresponds to 119–126; sequence QPRNKAAS. A helical membrane pass occupies residues 127-147; the sequence is SIQRVLSTLTLAVFPTLYFFN. At 148–150 the chain is on the cytoplasmic side; it reads FLY. The helical transmembrane segment at 151 to 171 threads the bilayer; that stretch reads YTEAGSMFFTLFAYLMCLYGN. At 172–175 the chain is on the extracellular side; sequence HKTS. Residues 176–196 traverse the membrane as a helical segment; it reads AFLGFCGFMFRQTNIIWAVFC. Residues 197 to 256 are Cytoplasmic-facing; it reads AGNVIAQKLTEAWKTELQKKEDRLPPIKGPFAEFRKILQFLLAYSMSFKNLSMLFCLTWP. The chain crosses the membrane as a helical span at residues 257 to 277; the sequence is YILLGFLFCAFVVVNGGIVIG. Over 278–283 the chain is Extracellular; that stretch reads DRSSHE. A helical membrane pass occupies residues 284 to 304; that stretch reads ACLHFPQLFYFFSFTLFFSFP. The Cytoplasmic segment spans residues 305 to 317; that stretch reads HLLSPSKIKTFLS. Residues 318–338 traverse the membrane as a helical segment; that stretch reads LVWKHGILFLVVTLVSVFLVW. The Extracellular segment spans residues 339–365; it reads KFTYAHKYLLADNRHYTFYVWKRVFQR. Residues 366-386 form a helical membrane-spanning segment; it reads YAILKYLLVPAYIFAGWSIAD. Residues 387 to 392 are Cytoplasmic-facing; sequence SLKSKP. Residues 393–413 form a helical membrane-spanning segment; the sequence is IFWNLMFFICLFIVIVPQKLL. Topologically, residues 414–436 are extracellular; the sequence is EFRYFILPYVIYRLNITLPPTSR. A helical membrane pass occupies residues 437–457; sequence LVCELSCYAIVNFITFYIFLN. Residues 458 to 473 lie on the Cytoplasmic side of the membrane; it reads KTFQWPNSQDIQRFMW.

The protein belongs to the ALG10 glucosyltransferase family. As to quaternary structure, interacts with KCNH1; may regulate KCNH1, possibly by regulating its N-glycosylation. Interacts with KCNH2; may reduce KCNH2 sensitivity to classic proarrhythmic drug blockade, possibly by regulating its N-glycosylation. As to expression, highly expressed in heart, placenta, liver, kidney and pancreas. Weakly expressed in lung, skeletal muscle and brain.

It is found in the endoplasmic reticulum membrane. The catalysed reaction is an alpha-D-Glc-(1-&gt;3)-alpha-D-Glc-(1-&gt;3)-alpha-D-Man-(1-&gt;2)-alpha-D-Man-(1-&gt;2)-alpha-D-Man-(1-&gt;3)-[alpha-D-Man-(1-&gt;2)-alpha-D-Man-(1-&gt;3)-[alpha-D-Man-(1-&gt;2)-alpha-D-Man-(1-&gt;6)]-alpha-D-Man-(1-&gt;6)]-beta-D-Man-(1-&gt;4)-beta-D-GlcNAc-(1-&gt;4)-alpha-D-GlcNAc-diphospho-di-trans,poly-cis-dolichol + a di-trans,poly-cis-dolichyl beta-D-glucosyl phosphate = a alpha-D-Glc-(1-&gt;2)-alpha-D-Glc-(1-&gt;3)-alpha-D-Glc-(1-&gt;3)-alpha-D-Man-(1-&gt;2)-alpha-D-Man-(1-&gt;2)-alpha-D-Man-(1-&gt;3)-[alpha-D-Man-(1-&gt;2)-alpha-D-Man-(1-&gt;3)-[alpha-D-Man-(1-&gt;2)-alpha-D-Man-(1-&gt;6)]-alpha-D-Man-(1-&gt;6)]-beta-D-Man-(1-&gt;4)-beta-D-GlcNAc-(1-&gt;4)-alpha-D-GlcNAc-diphospho-di-trans,poly-cis-dolichol + a di-trans,poly-cis-dolichyl phosphate + H(+). It functions in the pathway protein modification; protein glycosylation. Functionally, dol-P-Glc:Glc(2)Man(9)GlcNAc(2)-PP-Dol alpha-1,2-glucosyltransferase that operates in the biosynthetic pathway of dolichol-linked oligosaccharides, the glycan precursors employed in protein asparagine (N)-glycosylation. The assembly of dolichol-linked oligosaccharides begins on the cytosolic side of the endoplasmic reticulum membrane and finishes in its lumen. The sequential addition of sugars to dolichol pyrophosphate produces dolichol-linked oligosaccharides containing fourteen sugars, including two GlcNAcs, nine mannoses and three glucoses. Once assembled, the oligosaccharide is transferred from the lipid to nascent proteins by oligosaccharyltransferases. In the lumen of the endoplasmic reticulum, adds the third and last glucose residue from dolichyl phosphate glucose (Dol-P-Glc) onto the lipid-linked oligosaccharide intermediate Glc(2)Man(9)GlcNAc(2)-PP-Dol to produce Glc(3)Man(9)GlcNAc(2)-PP-Dol. The sequence is that of Dol-P-Glc:Glc(2)Man(9)GlcNAc(2)-PP-Dol alpha-1,2-glucosyltransferase from Homo sapiens (Human).